Consider the following 488-residue polypeptide: 3-octaprenyl-4-hydroxybenzoate carboxy-lyase (488 aa).

Residue N172 participates in Mn(2+) binding. Residues I175 to R177, R189 to L191, and R194 to G195 each bind prenylated FMN. Mn(2+) is bound at residue E238. Residue D287 is the Proton donor of the active site.

Belongs to the UbiD family. In terms of assembly, homohexamer. Requires prenylated FMN as cofactor. The cofactor is Mn(2+).

The protein localises to the cell membrane. It carries out the reaction a 4-hydroxy-3-(all-trans-polyprenyl)benzoate + H(+) = a 2-(all-trans-polyprenyl)phenol + CO2. The protein operates within cofactor biosynthesis; ubiquinone biosynthesis. Functionally, catalyzes the decarboxylation of 3-octaprenyl-4-hydroxy benzoate to 2-octaprenylphenol, an intermediate step in ubiquinone biosynthesis. The chain is 3-octaprenyl-4-hydroxybenzoate carboxy-lyase from Pseudomonas paraeruginosa (strain DSM 24068 / PA7) (Pseudomonas aeruginosa (strain PA7)).